Here is a 356-residue protein sequence, read N- to C-terminus: Dual-specificity RNA methyltransferase RlmN (356 aa).

Glutamate 89 (proton acceptor) is an active-site residue. The Radical SAM core domain maps to 108–341 (SHARYTICVS…CTIRESKGLD (234 aa)). Cysteines 115 and 346 form a disulfide. Residues cysteine 122, cysteine 126, and cysteine 129 each contribute to the [4Fe-4S] cluster site. S-adenosyl-L-methionine contacts are provided by residues 172-173 (GE), serine 204, 227-229 (SLH), and asparagine 303. The active-site S-methylcysteine intermediate is cysteine 346.

This sequence belongs to the radical SAM superfamily. RlmN family. [4Fe-4S] cluster is required as a cofactor.

It is found in the cytoplasm. The enzyme catalyses adenosine(2503) in 23S rRNA + 2 reduced [2Fe-2S]-[ferredoxin] + 2 S-adenosyl-L-methionine = 2-methyladenosine(2503) in 23S rRNA + 5'-deoxyadenosine + L-methionine + 2 oxidized [2Fe-2S]-[ferredoxin] + S-adenosyl-L-homocysteine. The catalysed reaction is adenosine(37) in tRNA + 2 reduced [2Fe-2S]-[ferredoxin] + 2 S-adenosyl-L-methionine = 2-methyladenosine(37) in tRNA + 5'-deoxyadenosine + L-methionine + 2 oxidized [2Fe-2S]-[ferredoxin] + S-adenosyl-L-homocysteine. Functionally, specifically methylates position 2 of adenine 2503 in 23S rRNA and position 2 of adenine 37 in tRNAs. m2A2503 modification seems to play a crucial role in the proofreading step occurring at the peptidyl transferase center and thus would serve to optimize ribosomal fidelity. The polypeptide is Dual-specificity RNA methyltransferase RlmN (Campylobacter jejuni subsp. jejuni serotype O:23/36 (strain 81-176)).